The sequence spans 167 residues: Large ribosomal subunit protein uL10 (167 aa).

This sequence belongs to the universal ribosomal protein uL10 family. Part of the ribosomal stalk of the 50S ribosomal subunit. The N-terminus interacts with L11 and the large rRNA to form the base of the stalk. The C-terminus forms an elongated spine to which L12 dimers bind in a sequential fashion forming a multimeric L10(L12)X complex.

Functionally, forms part of the ribosomal stalk, playing a central role in the interaction of the ribosome with GTP-bound translation factors. The polypeptide is Large ribosomal subunit protein uL10 (Ligilactobacillus salivarius (strain UCC118) (Lactobacillus salivarius)).